The sequence spans 129 residues: MAKDYSRTQRIGDQMQRELAVLIQREIKDPRLGLVTITAVDVSRDLSHAKVFITVMGKDDDAEQIKLNLEILGEAAGYLRMLLGKSMKVRTIPQLHFHYDASIRRGAELSALIERAVAEDRKHQDGSEG.

Belongs to the RbfA family. In terms of assembly, monomer. Binds 30S ribosomal subunits, but not 50S ribosomal subunits or 70S ribosomes.

The protein resides in the cytoplasm. Its function is as follows. One of several proteins that assist in the late maturation steps of the functional core of the 30S ribosomal subunit. Associates with free 30S ribosomal subunits (but not with 30S subunits that are part of 70S ribosomes or polysomes). Required for efficient processing of 16S rRNA. May interact with the 5'-terminal helix region of 16S rRNA. The polypeptide is Ribosome-binding factor A (Ectopseudomonas mendocina (strain ymp) (Pseudomonas mendocina)).